A 602-amino-acid polypeptide reads, in one-letter code: Exo-poly-alpha-D-galacturonosidase (602 aa).

The N-terminal stretch at 1–27 (MKVITFSRRSALASIVATCLMSTPALA) is a signal peptide. A Fibronectin type-III domain is found at 32-149 (APQKLQIPTL…TVTTTTTAVP (118 aa)). Catalysis depends on D395, which acts as the Proton donor. The active site involves H428.

It belongs to the glycosyl hydrolase 28 family.

It is found in the secreted. The enzyme catalyses [(1-&gt;4)-alpha-D-galacturonosyl](n) + H2O = alpha-D-galacturonosyl-(1-&gt;4)-D-galacturonate + [(1-&gt;4)-alpha-D-galacturonosyl](n-2). In terms of biological role, contributes significantly to bacterial utilization of polygalacturonate and the induction of pectate lyase in the presence of extracellular pectic polymers. In Dickeya chrysanthemi (Pectobacterium chrysanthemi), this protein is Exo-poly-alpha-D-galacturonosidase (pehX).